A 479-amino-acid polypeptide reads, in one-letter code: Cardiolipin synthase A (479 aa).

The next 2 membrane-spanning stretches (helical) occupy residues 8–28 (FFGY…LHAV) and 38–58 (IAWA…YLVF). 2 PLD phosphodiesterase domains span residues 218–245 (VNFR…GDEY) and 392–419 (QPGF…DNRS). Catalysis depends on residues His223, Lys225, Asp230, His397, Lys399, and Asp404.

This sequence belongs to the phospholipase D family. Cardiolipin synthase subfamily. ClsA sub-subfamily.

The protein localises to the cell inner membrane. It carries out the reaction 2 a 1,2-diacyl-sn-glycero-3-phospho-(1'-sn-glycerol) = a cardiolipin + glycerol. In terms of biological role, catalyzes the reversible phosphatidyl group transfer from one phosphatidylglycerol molecule to another to form cardiolipin (CL) (diphosphatidylglycerol) and glycerol. The chain is Cardiolipin synthase A from Pseudomonas putida (strain W619).